Here is a 596-residue protein sequence, read N- to C-terminus: Structural protein precursor VP8 (596 aa).

Its subcellular location is the virion. Functionally, 120 subunits of the putative clamp protein VP8b appear to stabilize the capsid shell. The protein is Structural protein precursor VP8 of Oryza latifolia (Indian wild rice).